A 206-amino-acid chain; its full sequence is Ras-related protein Rab-18 (206 aa).

Positions 17, 20, 21, 22, 23, 34, 35, 40, 66, 123, 125, and 152 each coordinate GTP. Serine 22 contacts Mg(2+). 2 short sequence motifs (switch) span residues 31–45 (DTFD…GVDF) and 63–80 (DTAG…YYRG). Mg(2+) is bound at residue threonine 40. Residue cysteine 199 is the site of S-palmitoyl cysteine attachment. Cysteine 203 is subject to Cysteine methyl ester. Cysteine 203 is lipidated: S-geranylgeranyl cysteine. Positions 204–206 (SML) are cleaved as a propeptide — removed in mature form.

Belongs to the small GTPase superfamily. Rab family. Requires Mg(2+) as cofactor.

It is found in the endoplasmic reticulum membrane. Its subcellular location is the golgi apparatus. The protein localises to the cis-Golgi network membrane. It localises to the lipid droplet. The protein resides in the apical cell membrane. The enzyme catalyses GTP + H2O = GDP + phosphate + H(+). Its activity is regulated as follows. Regulated by guanine nucleotide exchange factors (GEFs) which promote the exchange of bound GDP for free GTP. Regulated by GTPase activating proteins (GAPs) which increase the GTP hydrolysis activity at the ER membrane. Inhibited by GDP dissociation inhibitors (GDIs) which prevent Rab-GDP dissociation. The small GTPases Rab are key regulators of intracellular membrane trafficking, from the formation of transport vesicles to their fusion with membranes. Rabs cycle between an inactive GDP-bound form and an active GTP-bound form that is able to recruit to membranes different sets of downstream effectors directly responsible for vesicle formation, movement, tethering and fusion. RAB18 is required for the localization of ZFYVE1 to lipid droplets and for its function in mediating the formation of endoplasmic reticulum-lipid droplets (ER-LD) contacts. Also required for maintaining endoplasmic reticulum structure. Plays a role in apical endocytosis/recycling. Plays a key role in eye and brain development and neurodegeneration. This chain is Ras-related protein Rab-18 (RAB18), found in Gallus gallus (Chicken).